We begin with the raw amino-acid sequence, 858 residues long: Leucine--tRNA ligase (858 aa).

Positions 42-52 (PYPSGRLHMGH) match the 'HIGH' region motif. The 'KMSKS' region motif lies at 618–622 (KMSKS). ATP is bound at residue Lys-621.

The protein belongs to the class-I aminoacyl-tRNA synthetase family.

The protein localises to the cytoplasm. It carries out the reaction tRNA(Leu) + L-leucine + ATP = L-leucyl-tRNA(Leu) + AMP + diphosphate. The protein is Leucine--tRNA ligase of Vibrio cholerae serotype O1 (strain ATCC 39315 / El Tor Inaba N16961).